Reading from the N-terminus, the 92-residue chain is Small ribosomal subunit protein uS19c (92 aa).

Belongs to the universal ribosomal protein uS19 family.

Its subcellular location is the plastid. It is found in the chloroplast. Its function is as follows. Protein S19 forms a complex with S13 that binds strongly to the 16S ribosomal RNA. The sequence is that of Small ribosomal subunit protein uS19c from Lobularia maritima (Sweet alyssum).